We begin with the raw amino-acid sequence, 188 residues long: Acireductone dioxygenase (188 aa).

Fe(2+) is bound by residues histidine 97, histidine 99, glutamate 103, and histidine 141. Positions 97, 99, 103, and 141 each coordinate Ni(2+).

The protein belongs to the acireductone dioxygenase (ARD) family. In terms of assembly, monomer. Requires Fe(2+) as cofactor. Ni(2+) is required as a cofactor.

The catalysed reaction is 1,2-dihydroxy-5-(methylsulfanyl)pent-1-en-3-one + O2 = 3-(methylsulfanyl)propanoate + CO + formate + 2 H(+). It catalyses the reaction 1,2-dihydroxy-5-(methylsulfanyl)pent-1-en-3-one + O2 = 4-methylsulfanyl-2-oxobutanoate + formate + 2 H(+). Its pathway is amino-acid biosynthesis; L-methionine biosynthesis via salvage pathway; L-methionine from S-methyl-5-thio-alpha-D-ribose 1-phosphate: step 5/6. Functionally, catalyzes 2 different reactions between oxygen and the acireductone 1,2-dihydroxy-3-keto-5-methylthiopentene (DHK-MTPene) depending upon the metal bound in the active site. Fe-containing acireductone dioxygenase (Fe-ARD) produces formate and 2-keto-4-methylthiobutyrate (KMTB), the alpha-ketoacid precursor of methionine in the methionine recycle pathway. Ni-containing acireductone dioxygenase (Ni-ARD) produces methylthiopropionate, carbon monoxide and formate, and does not lie on the methionine recycle pathway. This is Acireductone dioxygenase from Xylella fastidiosa (strain M23).